An 878-amino-acid chain; its full sequence is DNA mismatch repair protein MutS (878 aa).

630-637 (GPNMAGKS) is a binding site for ATP.

It belongs to the DNA mismatch repair MutS family.

Its function is as follows. This protein is involved in the repair of mismatches in DNA. It is possible that it carries out the mismatch recognition step. This protein has a weak ATPase activity. This Chlorobaculum tepidum (strain ATCC 49652 / DSM 12025 / NBRC 103806 / TLS) (Chlorobium tepidum) protein is DNA mismatch repair protein MutS.